The following is a 1692-amino-acid chain: Flagellar attachment zone protein 1 (1692 aa).

Coiled-coil stretches lie at residues 613–657, 684–864, and 903–1607; these read REQE…KLQK, VTLD…HKVR, and NDHM…SALE. 37 repeat units span residues 1012–1025, 1026–1039, 1040–1053, 1054–1067, 1068–1081, 1082–1095, 1096–1109, 1110–1123, 1124–1137, 1138–1151, 1152–1165, 1166–1179, 1180–1193, 1194–1207, 1208–1221, 1222–1235, 1236–1249, 1250–1263, 1264–1277, 1278–1291, 1292–1305, 1306–1319, 1320–1333, 1334–1347, 1348–1361, 1362–1375, 1376–1389, 1390–1403, 1404–1417, 1418–1431, 1432–1445, 1446–1459, 1460–1473, 1474–1487, 1488–1501, 1502–1515, and 1516–1529. The tract at residues 1012-1529 is 37 X 14 AA tandem repeats of E-E-L-E-L-K-[VA]-A-E-N-E-K-L-A; sequence EELELKAAEN…LKVAENKRLA (518 aa).

It is found in the cell projection. The protein resides in the cilium. Its subcellular location is the flagellum. Functionally, a component of FAZ filament that is required for correct FAZ assembly and attachment. Not essential for new flagellum growth. The protein is Flagellar attachment zone protein 1 of Trypanosoma brucei brucei (strain 927/4 GUTat10.1).